The following is a 164-amino-acid chain: Dynein regulatory complex protein 8 (164 aa).

2 EF-hand domains span residues 16–51 and 94–129; these read ELHK…LGCC and AAED…EGEP.

It belongs to the DRC8 family. In terms of assembly, component of the nexin-dynein regulatory complex (N-DRC).

It is found in the cytoplasm. The protein resides in the cytoskeleton. Its subcellular location is the flagellum axoneme. In terms of biological role, component of the nexin-dynein regulatory complex (N-DRC), a key regulator of ciliary/flagellar motility which maintains the alignment and integrity of the distal axoneme and regulates microtubule sliding in motile axonemes. The protein is Dynein regulatory complex protein 8 (Efcab2) of Mus musculus (Mouse).